A 449-amino-acid polypeptide reads, in one-letter code: Neuraminidase (449 aa).

The Intravirion portion of the chain corresponds to 1–6; it reads MNPNQK. The helical transmembrane segment at 7–29 threads the bilayer; sequence IITIGSVSLTIATVCFLMQIAIL. Positions 11–33 are involved in apical transport and lipid raft association; sequence GSVSLTIATVCFLMQIAILATNV. The Virion surface portion of the chain corresponds to 30 to 449; that stretch reads ATNVTLHFRQ…DGANINFMPL (420 aa). 3 N-linked (GlcNAc...) asparagine; by host glycosylation sites follow: N32, N48, and N66. The segment at 36–68 is hypervariable stalk region; that stretch reads HFRQNERSIPAYNQTTPCKPIIIERNIKYRNWS. A head of neuraminidase region spans residues 71 to 449; the sequence is QCQITGFAPF…DGANINFMPL (379 aa). 8 disulfides stabilise this stretch: C72–C397, C104–C109, C163–C210, C212–C217, C258–C271, C260–C269, C298–C317, and C401–C427. A substrate-binding site is contributed by R98. N123 and N126 each carry an N-linked (GlcNAc...) asparagine; by host glycan. The Proton donor/acceptor role is filled by D131. R132 is a binding site for substrate. N-linked (GlcNAc...) asparagine; by host glycans are attached at residues N180 and N214. Position 256–257 (256–257) interacts with substrate; it reads EE. R272 contributes to the substrate binding site. 3 residues coordinate Ca(2+): D273, G277, and D304. The disordered stretch occupies residues 305-330; the sequence is TPRNDDSSSSSNCRDPNNERGNPGVK. A substrate-binding site is contributed by R351. A glycan (N-linked (GlcNAc...) asparagine; by host) is linked at N382. Y386 serves as the catalytic Nucleophile.

Belongs to the glycosyl hydrolase 34 family. In terms of assembly, homotetramer. Ca(2+) is required as a cofactor. Post-translationally, N-glycosylated.

Its subcellular location is the virion membrane. It is found in the host apical cell membrane. It catalyses the reaction Hydrolysis of alpha-(2-&gt;3)-, alpha-(2-&gt;6)-, alpha-(2-&gt;8)- glycosidic linkages of terminal sialic acid residues in oligosaccharides, glycoproteins, glycolipids, colominic acid and synthetic substrates.. With respect to regulation, inhibited by the neuraminidase inhibitors zanamivir (Relenza) and oseltamivir (Tamiflu). These drugs interfere with the release of progeny virus from infected cells and are effective against all influenza strains. Resistance to neuraminidase inhibitors is quite rare. Functionally, catalyzes the removal of terminal sialic acid residues from viral and cellular glycoconjugates. Cleaves off the terminal sialic acids on the glycosylated HA during virus budding to facilitate virus release. Additionally helps virus spread through the circulation by further removing sialic acids from the cell surface. These cleavages prevent self-aggregation and ensure the efficient spread of the progeny virus from cell to cell. Otherwise, infection would be limited to one round of replication. Described as a receptor-destroying enzyme because it cleaves a terminal sialic acid from the cellular receptors. May facilitate viral invasion of the upper airways by cleaving the sialic acid moieties on the mucin of the airway epithelial cells. Likely to plays a role in the budding process through its association with lipid rafts during intracellular transport. May additionally display a raft-association independent effect on budding. Plays a role in the determination of host range restriction on replication and virulence. Sialidase activity in late endosome/lysosome traffic seems to enhance virus replication. In Aves, this protein is Neuraminidase.